Consider the following 1649-residue polypeptide: eIF-2-alpha kinase GCN2 (1649 aa).

Residues 1–26 (MAGGRGAAGRGPAEPQESYSQRQDHE) form a disordered region. Positions 25-137 (HELQALEAIY…HHVQSFLSEH (113 aa)) constitute an RWD domain. The stretch at 146-205 (HEEMLERQAQEKQQRLLEARQKEEQEQREILHEIQKRKEEIKEEKKRKEMAKQERLEITS) forms a coiled coil. The tract at residues 227-260 (HGGSPDFVGNGKARAHSSGRSRRERQYSVCSGEA) is disordered. Phosphoserine is present on Ser-230. The segment covering 239–249 (ARAHSSGRSRR) has biased composition (basic residues). Protein kinase domains are found at residues 296–539 (VYNA…HSFI) and 590–1001 (FEEL…SELL). ATP-binding positions include 596-604 (LGKGAFGAV) and Lys-619. The disordered stretch occupies residues 662-785 (PAVPGTPPPD…CNEKDSRHEI (124 aa)). A Phosphothreonine modification is found at Thr-667. Polar residues predominate over residues 705–721 (LSSSVEWSTSAERSNSA). 2 stretches are compositionally biased toward acidic residues: residues 731-740 (SSDEEDEDER) and 754-764 (SDSDIIFDNED). Asp-847 functions as the Proton acceptor in the catalytic mechanism. At Thr-870 the chain carries Phosphothreonine. Residues Thr-899 and Thr-904 each carry the phosphothreonine; by autocatalysis modification. Residues 1022-1493 (TDGKAYRTMM…DHVMQKLRTK (472 aa)) form a histidyl-tRNA synthetase-like region. N6-acetyllysine is present on Lys-1259.

It belongs to the protein kinase superfamily. Ser/Thr protein kinase family. GCN2 subfamily. Homodimer; homodimerization is important for kinase activation by uncharged tRNAs. Interacts with GCN1; this interaction stimulates EIF2AK4/GCN2 kinase activity and is impaired by IMPACT upon a variety of stress conditions, such as amino acid depletion, UV-C irradiation, proteasome inhibitor treatment and glucose deprivation. Interacts with DNAJC3; this interaction inhibits EIF2AK4/GCN2 kinase activity during endoplasmic reticulum (ER), hypothermic and amino acid-starving stress conditions. Interacts with MAP3K20; activates EIF2AK4/GCN2 kinase activity in response to moderate ribotoxic stress. Post-translationally, autophosphorylated; autophosphorylation on Thr-899 is increased upon amino acid starvation and in UV irradiation cells and inhibited in presence of IMPACT.

The protein resides in the cytoplasm. The enzyme catalyses L-seryl-[protein] + ATP = O-phospho-L-seryl-[protein] + ADP + H(+). The catalysed reaction is L-threonyl-[protein] + ATP = O-phospho-L-threonyl-[protein] + ADP + H(+). Its function is as follows. Metabolic-stress sensing protein kinase that phosphorylates the alpha subunit of eukaryotic translation initiation factor 2 (EIF2S1/eIF-2-alpha) in response to low amino acid availability. Plays a role as an activator of the integrated stress response (ISR) required for adaptation to amino acid starvation. EIF2S1/eIF-2-alpha phosphorylation in response to stress converts EIF2S1/eIF-2-alpha into a global protein synthesis inhibitor, leading to a global attenuation of cap-dependent translation, and thus to a reduced overall utilization of amino acids, while concomitantly initiating the preferential translation of ISR-specific mRNAs, such as the transcriptional activator ATF4, and hence allowing ATF4-mediated reprogramming of amino acid biosynthetic gene expression to alleviate nutrient depletion. Required for the translational induction of protein kinase PRKCH following amino acid starvation. Binds uncharged tRNAs. Involved in cell cycle arrest by promoting cyclin D1 mRNA translation repression after the unfolded protein response pathway (UPR) activation or cell cycle inhibitor CDKN1A/p21 mRNA translation activation in response to amino acid deprivation. Plays a role in the consolidation of synaptic plasticity, learning as well as formation of long-term memory. Plays a role in neurite outgrowth inhibition. Plays a role in feeding behavior to maintain amino acid homeostasis; contributes to the innate aversion toward diets of imbalanced amino acid composition. Plays a proapoptotic role in response to glucose deprivation. Promotes global cellular protein synthesis repression in response to UV irradiation independently of the stress-activated protein kinase/c-Jun N-terminal kinase (SAPK/JNK) and p38 MAPK signaling pathways. Plays a role in the antiviral response against alphavirus infection; impairs early viral mRNA translation of the incoming genomic virus RNA, thus preventing alphavirus replication. The sequence is that of eIF-2-alpha kinase GCN2 from Rattus norvegicus (Rat).